The chain runs to 367 residues: Peptide chain release factor 2 (367 aa).

An N5-methylglutamine modification is found at glutamine 254.

This sequence belongs to the prokaryotic/mitochondrial release factor family. In terms of processing, methylated by PrmC. Methylation increases the termination efficiency of RF2.

The protein resides in the cytoplasm. Its function is as follows. Peptide chain release factor 2 directs the termination of translation in response to the peptide chain termination codons UGA and UAA. This chain is Peptide chain release factor 2, found in Burkholderia cenocepacia (strain ATCC BAA-245 / DSM 16553 / LMG 16656 / NCTC 13227 / J2315 / CF5610) (Burkholderia cepacia (strain J2315)).